A 144-amino-acid polypeptide reads, in one-letter code: Transcriptional regulator SlyA (144 aa).

One can recognise an HTH marR-type domain in the interval 2 to 135; it reads ESPLGSDLAR…LITLIAKLEH (134 aa). Positions 49-72 form a DNA-binding region, H-T-H motif; sequence QIQLAKAIGIEQPSLVRTLDQLEE.

It belongs to the SlyA family. As to quaternary structure, homodimer.

Functionally, transcription regulator that can specifically activate or repress expression of target genes. This chain is Transcriptional regulator SlyA, found in Shigella boydii serotype 18 (strain CDC 3083-94 / BS512).